We begin with the raw amino-acid sequence, 635 residues long: Transcription termination factor FttA (635 aa).

2 KHa regions span residues 1-69 (MSAE…PSVL) and 4-69 (EDIL…PSVL). The segment at 70-137 (VEPDIAKDKI…WAPKPVRTPP (68 aa)) is KHb. Metallo-beta-lactamase N-terminus regions lie at residues 179-382 (WVRT…YGGY) and 179-383 (WVRT…GGYD). Beta-Casp stretches follow at residues 180–577 (VRTS…GFSG) and 383–576 (DDVL…EGFS). 6 residues coordinate Zn(2+): His241, His243, Asp245, His246, His328, and Asp351. 2 metallo-beta-lactamase C-terminus regions span residues 577–635 (GHSD…IRLR) and 578–635 (HSDR…IRLR). Residue His602 coordinates Zn(2+).

Belongs to the metallo-beta-lactamase superfamily. RNA-metabolizing metallo-beta-lactamase-like family. FttA subfamily. As to quaternary structure, homodimer. Interacts with RNA polymerase (RNAP); interaction is not dependent on DNA or RNA. Interacts with the Spt4-Spt5 complex. It depends on Zn(2+) as a cofactor.

Its subcellular location is the chromosome. In terms of biological role, terminates transcription on the whole genome. Termination is linked to FttA-mediated RNA cleavage and does not require NTP hydrolysis. Cleaves endonucleolytically at the RNA exit channel of RNA polymerase (RNAP); the 5'-3' exonuclease activity of this protein degrades the nascent RNA released from RNAP. Its function is as follows. Terminates transcription genome-wide. Transcription termination is most effective in vivo on RNAs with more than one U4-tract in their 3'-ends (including non-protein coding RNAs); U4-tracts are recognized by this protein. Also plays a role in termination of RNAs without U-tracts by an unknown mechanism. Has endonuclease activity after U-rich tracts in transcription termination sites. Binds RNA at U4-tracts found directly upstream of the experimentally determined transcription termination sites; binds preferentially to RNAs with more U4-tracts at their 3'-ends. This Methanococcus maripaludis (strain DSM 14266 / JCM 13030 / NBRC 101832 / S2 / LL) protein is Transcription termination factor FttA.